Here is a 432-residue protein sequence, read N- to C-terminus: Histidine--tRNA ligase (432 aa).

It belongs to the class-II aminoacyl-tRNA synthetase family. As to quaternary structure, homodimer.

It is found in the cytoplasm. It catalyses the reaction tRNA(His) + L-histidine + ATP = L-histidyl-tRNA(His) + AMP + diphosphate + H(+). This chain is Histidine--tRNA ligase, found in Ralstonia nicotianae (strain ATCC BAA-1114 / GMI1000) (Ralstonia solanacearum).